The chain runs to 316 residues: tRNA-dihydrouridine(16) synthase (316 aa).

Residues 7–9 (PME) and Gln-68 contribute to the FMN site. Cys-98 serves as the catalytic Proton donor. FMN is bound by residues Lys-139, 200-202 (NGE), and 224-225 (GR).

This sequence belongs to the Dus family. DusC subfamily. It depends on FMN as a cofactor.

The catalysed reaction is 5,6-dihydrouridine(16) in tRNA + NADP(+) = uridine(16) in tRNA + NADPH + H(+). It carries out the reaction 5,6-dihydrouridine(16) in tRNA + NAD(+) = uridine(16) in tRNA + NADH + H(+). Functionally, catalyzes the synthesis of 5,6-dihydrouridine (D), a modified base found in the D-loop of most tRNAs, via the reduction of the C5-C6 double bond in target uridines. Specifically modifies U16 in tRNAs. The chain is tRNA-dihydrouridine(16) synthase from Escherichia coli O157:H7.